We begin with the raw amino-acid sequence, 57 residues long: uncharacterized protein (57 aa).

A helical transmembrane segment spans residues 34–54 (AALLDAAALVVIPGLLTAAAV).

The protein resides in the membrane. This is an uncharacterized protein from Dictyostelium discoideum (Social amoeba).